The following is a 282-amino-acid chain: MVQQGFSIDLILARSREEAADGKDSMSSRPHIPCAPQPLPPNKYAKEMPRRKDGQDVQEHSSWSLGEQGKKLQYSSPSSAALHRSWGSSDDFSSVGSEDDSTEGSPSPMRNSQETETDHRGESPKSDLQRHLRTAFTPQQISKLEQAFNKQRYLGASERKKLATSLRLSEIQVKTWFQNRRMKLKRQIQDQQHNMVPPPVCYPQTFPYYPGVLPVPLNSGSFYQPPAHPFQAPQNSYIPDPRFIPQPLPHHIRMSVALQQQYPPLGLPPGRYFTGLASKNDG.

Basic and acidic residues-rich tracts occupy residues 17–26 (EEAADGKDSM) and 44–59 (YAKE…DVQE). The disordered stretch occupies residues 17-128 (EEAADGKDSM…HRGESPKSDL (112 aa)). Polar residues-rich tracts occupy residues 86–96 (WGSSDDFSSVG) and 103–114 (EGSPSPMRNSQE). Positions 116–128 (ETDHRGESPKSDL) are enriched in basic and acidic residues. The homeobox DNA-binding region spans 129 to 188 (QRHLRTAFTPQQISKLEQAFNKQRYLGASERKKLATSLRLSEIQVKTWFQNRRMKLKRQI).

In terms of tissue distribution, expressed in the ventral marginal zone of blastulae. At early gastrulation, expression begins to spread to the animal pole (ectoderm), and at stage 11.5 is expressed in a gradient across the animal cap, with levels highest in the ventral region. At the end of gastrulation, predominantly localized to the ventral and lateral regions of the closing slit blastopore. Also expressed at a low level in ventral endoderm.

Its subcellular location is the nucleus. Its function is as follows. Transcriptional repressor. Acts in a ventral signaling pathway downstream of bmp4, which suppresses dorsal mesoderm formation and leads to both ventral mesoderm and ventral ectoderm formation. Acts in the ectoderm to simultaneously specify epidermal lineages and restrict neuralization. Represses transcription of dorsal-specific genes. Binds to DNA, with preference for the target sequences 5'-TAATGC-3' and 5'-TAATTG-3'. Acts in a pathway downstream of bmp4 and fgf to negatively regulate erythroid specification. The chain is Homeobox protein pv.1 from Xenopus laevis (African clawed frog).